Reading from the N-terminus, the 1052-residue chain is Error-prone DNA polymerase (1052 aa).

This sequence belongs to the DNA polymerase type-C family. DnaE2 subfamily.

The protein localises to the cytoplasm. The catalysed reaction is DNA(n) + a 2'-deoxyribonucleoside 5'-triphosphate = DNA(n+1) + diphosphate. Functionally, DNA polymerase involved in damage-induced mutagenesis and translesion synthesis (TLS). It is not the major replicative DNA polymerase. The protein is Error-prone DNA polymerase of Bordetella bronchiseptica (strain ATCC BAA-588 / NCTC 13252 / RB50) (Alcaligenes bronchisepticus).